The following is a 673-amino-acid chain: Protein transport Sec1a (673 aa).

Residues 538–591 are disordered; the sequence is SSHKEESEARTGSVRKSSAPTAVPERKATPHSMRSRRTATWARPHSSDDGYSSD.

Belongs to the STXBP/unc-18/SEC1 family. Does not bind the syntaxin KNOLLE.

Functionally, involved in the vesicle trafficking. Binds syntaxins. This is Protein transport Sec1a (SEC1A) from Arabidopsis thaliana (Mouse-ear cress).